The chain runs to 508 residues: Maturase K (508 aa).

It belongs to the intron maturase 2 family. MatK subfamily.

Its subcellular location is the plastid. The protein resides in the chloroplast. Its function is as follows. Usually encoded in the trnK tRNA gene intron. Probably assists in splicing its own and other chloroplast group II introns. This Abies bracteata (Bristle-cone fir) protein is Maturase K.